A 216-amino-acid polypeptide reads, in one-letter code: Glycerol-3-phosphate acyltransferase (216 aa).

The next 5 helical transmembrane spans lie at 11-31 (LVLG…FGLV), 62-82 (LALA…LVAS), 95-115 (VLAG…PIWL), 132-152 (ATAW…AALF), and 171-191 (LVLA…LAWI).

The protein belongs to the PlsY family. In terms of assembly, probably interacts with PlsX.

The protein resides in the cell inner membrane. It catalyses the reaction an acyl phosphate + sn-glycerol 3-phosphate = a 1-acyl-sn-glycero-3-phosphate + phosphate. It participates in lipid metabolism; phospholipid metabolism. In terms of biological role, catalyzes the transfer of an acyl group from acyl-phosphate (acyl-PO(4)) to glycerol-3-phosphate (G3P) to form lysophosphatidic acid (LPA). This enzyme utilizes acyl-phosphate as fatty acyl donor, but not acyl-CoA or acyl-ACP. This Rhodospirillum rubrum (strain ATCC 11170 / ATH 1.1.1 / DSM 467 / LMG 4362 / NCIMB 8255 / S1) protein is Glycerol-3-phosphate acyltransferase.